The chain runs to 552 residues: Glutamate--tRNA ligase (552 aa).

Residues 41–51 (PSPTGFQHIGG) carry the 'HIGH' region motif. Residues 293–297 (KLSKR) carry the 'KMSKS' region motif. Residue lysine 296 participates in ATP binding.

Belongs to the class-I aminoacyl-tRNA synthetase family. Glutamate--tRNA ligase type 1 subfamily. In terms of assembly, monomer.

It localises to the cytoplasm. The enzyme catalyses tRNA(Glu) + L-glutamate + ATP = L-glutamyl-tRNA(Glu) + AMP + diphosphate. Its function is as follows. Catalyzes the attachment of glutamate to tRNA(Glu) in a two-step reaction: glutamate is first activated by ATP to form Glu-AMP and then transferred to the acceptor end of tRNA(Glu). This Clostridium perfringens (strain SM101 / Type A) protein is Glutamate--tRNA ligase.